A 115-amino-acid polypeptide reads, in one-letter code: Large ribosomal subunit protein bL19 (115 aa).

The protein belongs to the bacterial ribosomal protein bL19 family.

In terms of biological role, this protein is located at the 30S-50S ribosomal subunit interface and may play a role in the structure and function of the aminoacyl-tRNA binding site. In Thermosipho melanesiensis (strain DSM 12029 / CIP 104789 / BI429), this protein is Large ribosomal subunit protein bL19.